Here is a 58-residue protein sequence, read N- to C-terminus: Isocitrate lyase (58 aa).

It belongs to the isocitrate lyase/PEP mutase superfamily. Isocitrate lyase family. Homotetramer. It depends on Mg(2+) as a cofactor.

It is found in the glyoxysome. The enzyme catalyses D-threo-isocitrate = glyoxylate + succinate. The protein operates within carbohydrate metabolism; glyoxylate cycle; (S)-malate from isocitrate: step 1/2. Involved in storage lipid mobilization during the growth of higher plant seedling. This is Isocitrate lyase from Helianthus annuus (Common sunflower).